The sequence spans 87 residues: Small ribosomal subunit protein uS17 (87 aa).

It belongs to the universal ribosomal protein uS17 family. In terms of assembly, part of the 30S ribosomal subunit.

In terms of biological role, one of the primary rRNA binding proteins, it binds specifically to the 5'-end of 16S ribosomal RNA. The sequence is that of Small ribosomal subunit protein uS17 from Bacillus subtilis (strain 168).